The chain runs to 316 residues: GTP cyclohydrolase FolE2 2 (316 aa).

It belongs to the GTP cyclohydrolase IV family.

The catalysed reaction is GTP + H2O = 7,8-dihydroneopterin 3'-triphosphate + formate + H(+). It participates in cofactor biosynthesis; 7,8-dihydroneopterin triphosphate biosynthesis; 7,8-dihydroneopterin triphosphate from GTP: step 1/1. Functionally, converts GTP to 7,8-dihydroneopterin triphosphate. The chain is GTP cyclohydrolase FolE2 2 from Burkholderia orbicola (strain MC0-3).